Here is a 5801-residue protein sequence, read N- to C-terminus: uncharacterized protein (5801 aa).

7 disordered regions span residues 1114–1136 (DDDN…NKKI), 1827–1846 (KDRS…SINN), 2040–2109 (NNGE…SPLF), 3351–3392 (EKSN…NNSG), 5134–5168 (DNNN…SESD), 5478–5573 (ISDP…EDII), and 5600–5638 (HDKD…ETPG). Composition is skewed to low complexity over residues 1118-1134 (NNSN…NNNK), 1831-1846 (SSSS…SINN), 2048-2096 (QQLQ…QQQQ), 3353-3392 (SNNN…NNSG), and 5135-5153 (NNNN…NNNN). Positions 5496 to 5573 (DNEEEEEDDD…EDEDEDEDII (78 aa)) are enriched in acidic residues. Residues 5617 to 5629 (QQPEKPQQPEKPQ) show a composition bias toward basic and acidic residues.

This is an uncharacterized protein from Dictyostelium discoideum (Social amoeba).